The chain runs to 447 residues: Na(+)-translocating NADH-quinone reductase subunit A (447 aa).

This sequence belongs to the NqrA family. Composed of six subunits; NqrA, NqrB, NqrC, NqrD, NqrE and NqrF.

The catalysed reaction is a ubiquinone + n Na(+)(in) + NADH + H(+) = a ubiquinol + n Na(+)(out) + NAD(+). NQR complex catalyzes the reduction of ubiquinone-1 to ubiquinol by two successive reactions, coupled with the transport of Na(+) ions from the cytoplasm to the periplasm. NqrA to NqrE are probably involved in the second step, the conversion of ubisemiquinone to ubiquinol. The sequence is that of Na(+)-translocating NADH-quinone reductase subunit A from Neisseria gonorrhoeae (strain ATCC 700825 / FA 1090).